The sequence spans 172 residues: Dehydratase cfoI (172 aa).

Catalysis depends on residues histidine 86 and histidine 111.

The protein belongs to the scytalone dehydratase family. Homotrimer. Each subunit contains an active site, located in the central part of the hydrophobic core of the monomer, which functions independently.

The protein operates within secondary metabolite biosynthesis; flavonoid biosynthesis. Its function is as follows. Cytochrome P450 monooxygenase; part of the gene cluster that mediates the biosynthesis of chlorflavonin, a fungal flavonoid with acetolactate synthase inhibitory activity. Within the pathway, cfoI is responsible for the hydroxylation of the flavonoid skeleton at position C3 with cfoF. The pathway begins with the PKS-NRPS hybrid synthetase cfoA that uses benzoic acid or p-hydroxybenzoic acid as a starter unit with four rounds of chain elongation using malonyl-CoA to form the chalcone skeleton. Then, a new type of chalcone isomerase, cfoK, catalyzes the conversion of the chalcone into a flavanone by a histidine-mediated oxa-Michael addition mechanism. The desaturation of flavanone to flavone is catalyzed by a new type of flavone synthase, the flavin mononucleotide (FMN)-dependent oxidoreductase cfoJ. Monooxygenases cfoF, cfoG, and P450 cfoH are responsible for the hydroxylation of the flavonoid skeleton at sites C3, C8, and C2', respectively. Like cfoF, the dehydratase cfoI plays also a role in the hydroxylation of position C3. Methyltransferases cfoB, cfoC, and cfoD then catalyze the methylation of C7-OH, C8-OH, and C3-OH, respectively. Finally, the monooxygenase cfoE is responsible for the chlorination of flavonoid at position C3'. This Aspergillus candidus protein is Dehydratase cfoI.